The following is a 128-amino-acid chain: NADPH-dependent 7-cyano-7-deazaguanine reductase (128 aa).

The Thioimide intermediate role is filled by C34. The Proton donor role is filled by D41. Substrate-binding positions include 56–58 and 75–76; these read VEL and HE.

Belongs to the GTP cyclohydrolase I family. QueF type 1 subfamily.

It localises to the cytoplasm. It carries out the reaction 7-aminomethyl-7-carbaguanine + 2 NADP(+) = 7-cyano-7-deazaguanine + 2 NADPH + 3 H(+). It functions in the pathway tRNA modification; tRNA-queuosine biosynthesis. In terms of biological role, catalyzes the NADPH-dependent reduction of 7-cyano-7-deazaguanine (preQ0) to 7-aminomethyl-7-deazaguanine (preQ1). The polypeptide is NADPH-dependent 7-cyano-7-deazaguanine reductase (Thermomicrobium roseum (strain ATCC 27502 / DSM 5159 / P-2)).